A 104-amino-acid polypeptide reads, in one-letter code: Large ribosomal subunit protein uL24 (104 aa).

The protein belongs to the universal ribosomal protein uL24 family. Part of the 50S ribosomal subunit.

One of two assembly initiator proteins, it binds directly to the 5'-end of the 23S rRNA, where it nucleates assembly of the 50S subunit. Functionally, one of the proteins that surrounds the polypeptide exit tunnel on the outside of the subunit. This chain is Large ribosomal subunit protein uL24, found in Bradyrhizobium sp. (strain BTAi1 / ATCC BAA-1182).